We begin with the raw amino-acid sequence, 85 residues long: uncharacterized protein (85 aa).

A run of 2 helical transmembrane segments spans residues 20-42 (IYWFFCLYYKDGPILYTIYTTFL) and 52-69 (IILRNTVAFLSFMYKHYY).

It localises to the membrane. This is an uncharacterized protein from Saccharomyces cerevisiae (strain ATCC 204508 / S288c) (Baker's yeast).